We begin with the raw amino-acid sequence, 560 residues long: Kinesin light chain 1 (560 aa).

A coiled-coil region spans residues 27 to 156 (KTKQVIQGLE…HLEFMNQLKK (130 aa)). The segment covering 156-176 (KYDDDISPSEDKDSDSSKEPL) has biased composition (basic and acidic residues). The segment at 156–203 (KYDDDISPSEDKDSDSSKEPLDDLFPNDEDDPGQGIQQQHSSAAAAAQ) is disordered. S162 carries the post-translational modification Phosphoserine. Over residues 188-203 (GQGIQQQHSSAAAAAQ) the composition is skewed to low complexity. 5 TPR repeats span residues 213–246 (LRTLHNLVIQYASQGRYEVAVPLCKQALEDLEKT), 255–288 (ATMLNILALVYRDQNKYKDAANLLNDALAIREKT), 297–330 (AATLNNLAVLYGKRGKYKEAEPLCKRALEIREKV), 339–372 (AKQLNNLALLCQNQGKYEEVEYYYQRALEIYQTK), and 381–414 (AKTKNNLASCYLKQGKFKQAETLYKEILTRAHER). Y449 is subject to Phosphotyrosine. S460 carries the phosphoserine modification. The TPR 6 repeat unit spans residues 464–497 (TTTLKNLGALYRRQGKFEAAETLEEAALRSRKQG). Phosphoserine is present on residues S521 and S524.

It belongs to the kinesin light chain family. In terms of assembly, oligomeric complex composed of two heavy chains and two light chains. Interacts with SPAG9. Interacts with ATCAY; may link mitochondria to KLC1 and regulate mitochondria localization into neuron projections. Interacts (via TPR repeats) with TOR1A; the interaction associates TOR1A with the kinesin oligomeric complex. Interacts with BORCS5. Interacts with MAPK8IP3/JIP3 and NTRK2/TRKB; interaction with NTRK2/TRKB is mediated by MAPK8IP3/JIP3. Interacts with CLSTN1; phosphorylation at Ser-460 inhibits interaction with CLSTN1. Post-translationally, phosphorylation at Ser-460 by ERK inhibits interaction with CLSTN1 and localization to cytoplasmic vesicles. Expressed in brain (at protein level).

It localises to the cell projection. Its subcellular location is the growth cone. It is found in the cytoplasmic vesicle. The protein localises to the cytoplasm. The protein resides in the cytoskeleton. Functionally, kinesin is a microtubule-associated force-producing protein that may play a role in organelle transport. The light chain may function in coupling of cargo to the heavy chain or in the modulation of its ATPase activity. In Rattus norvegicus (Rat), this protein is Kinesin light chain 1 (Klc1).